Consider the following 172-residue polypeptide: Peptidyl-prolyl cis-trans isomerase (172 aa).

The PPIase cyclophilin-type domain maps to 7 to 170 (FFDMTVGGAP…KVVKVADCGQ (164 aa)).

This sequence belongs to the cyclophilin-type PPIase family.

The protein resides in the cytoplasm. It carries out the reaction [protein]-peptidylproline (omega=180) = [protein]-peptidylproline (omega=0). Binds cyclosporin A (CsA). CsA mediates some of its effects via an inhibitory action on PPIase. PPIases accelerate the folding of proteins. It catalyzes the cis-trans isomerization of proline imidic peptide bonds in oligopeptides. The sequence is that of Peptidyl-prolyl cis-trans isomerase (CYP) from Zea mays (Maize).